The following is a 259-amino-acid chain: 5'-nucleotidase SurE 1 (259 aa).

A divalent metal cation contacts are provided by D16, D17, S48, and N101.

The protein belongs to the SurE nucleotidase family. It depends on a divalent metal cation as a cofactor.

Its subcellular location is the cytoplasm. The enzyme catalyses a ribonucleoside 5'-phosphate + H2O = a ribonucleoside + phosphate. In terms of biological role, nucleotidase that shows phosphatase activity on nucleoside 5'-monophosphates. The polypeptide is 5'-nucleotidase SurE 1 (Burkholderia lata (strain ATCC 17760 / DSM 23089 / LMG 22485 / NCIMB 9086 / R18194 / 383)).